Here is a 182-residue protein sequence, read N- to C-terminus: MNFSAKTVVVIAIGAALYGIGGLPMFGVPVFANTTLKPAMAVLALFSVLFGPIVGFLVGFIGHWVTDLFAGWGVWLTWVLGSGIVGMVIGLFPMMTKNRLQQGELPMKDFALFVVLALAGNVVGYGSSAFLDTILYAEPFTKVFTQLSIIAAGNTILIAVVGFLILKSVAKRNKQSRNLTEA.

Helical transmembrane passes span 8-28 (VVVI…MFGV), 41-61 (AVLA…VGFI), 72-92 (WGVW…IGLF), 110-130 (FALF…SSAF), and 146-166 (QLSI…FLIL).

Belongs to the UPF0397 family.

It is found in the cell membrane. This Vibrio atlanticus (strain LGP32) (Vibrio splendidus (strain Mel32)) protein is UPF0397 protein VS_II0189.